The sequence spans 569 residues: 2-succinyl-5-enolpyruvyl-6-hydroxy-3-cyclohexene-1-carboxylate synthase (569 aa).

The protein belongs to the TPP enzyme family. MenD subfamily. Homodimer. It depends on Mg(2+) as a cofactor. Requires Mn(2+) as cofactor. The cofactor is thiamine diphosphate.

The enzyme catalyses isochorismate + 2-oxoglutarate + H(+) = 5-enolpyruvoyl-6-hydroxy-2-succinyl-cyclohex-3-ene-1-carboxylate + CO2. It participates in quinol/quinone metabolism; 1,4-dihydroxy-2-naphthoate biosynthesis; 1,4-dihydroxy-2-naphthoate from chorismate: step 2/7. The protein operates within quinol/quinone metabolism; menaquinone biosynthesis. In terms of biological role, catalyzes the thiamine diphosphate-dependent decarboxylation of 2-oxoglutarate and the subsequent addition of the resulting succinic semialdehyde-thiamine pyrophosphate anion to isochorismate to yield 2-succinyl-5-enolpyruvyl-6-hydroxy-3-cyclohexene-1-carboxylate (SEPHCHC). The chain is 2-succinyl-5-enolpyruvyl-6-hydroxy-3-cyclohexene-1-carboxylate synthase from Shewanella sediminis (strain HAW-EB3).